We begin with the raw amino-acid sequence, 160 residues long: SsrA-binding protein (160 aa).

This sequence belongs to the SmpB family.

The protein resides in the cytoplasm. In terms of biological role, required for rescue of stalled ribosomes mediated by trans-translation. Binds to transfer-messenger RNA (tmRNA), required for stable association of tmRNA with ribosomes. tmRNA and SmpB together mimic tRNA shape, replacing the anticodon stem-loop with SmpB. tmRNA is encoded by the ssrA gene; the 2 termini fold to resemble tRNA(Ala) and it encodes a 'tag peptide', a short internal open reading frame. During trans-translation Ala-aminoacylated tmRNA acts like a tRNA, entering the A-site of stalled ribosomes, displacing the stalled mRNA. The ribosome then switches to translate the ORF on the tmRNA; the nascent peptide is terminated with the 'tag peptide' encoded by the tmRNA and targeted for degradation. The ribosome is freed to recommence translation, which seems to be the essential function of trans-translation. In Chloroflexus aurantiacus (strain ATCC 29364 / DSM 637 / Y-400-fl), this protein is SsrA-binding protein.